A 241-amino-acid chain; its full sequence is Adenosylcobinamide-GDP ribazoletransferase (241 aa).

7 consecutive transmembrane segments (helical) span residues 34–54 (RIPA…FTGS), 55–75 (FLSL…GFYL), 109–129 (VGPF…ELIT), 133–153 (PVAF…VLVF), 165–185 (MLFP…LPLL), 186–206 (LIDV…GFLI), and 221–241 (VLGG…NYLI).

Belongs to the CobS family. Requires Mg(2+) as cofactor.

Its subcellular location is the cell inner membrane. It catalyses the reaction alpha-ribazole + adenosylcob(III)inamide-GDP = adenosylcob(III)alamin + GMP + H(+). The catalysed reaction is alpha-ribazole 5'-phosphate + adenosylcob(III)inamide-GDP = adenosylcob(III)alamin 5'-phosphate + GMP + H(+). It functions in the pathway cofactor biosynthesis; adenosylcobalamin biosynthesis; adenosylcobalamin from cob(II)yrinate a,c-diamide: step 7/7. In terms of biological role, joins adenosylcobinamide-GDP and alpha-ribazole to generate adenosylcobalamin (Ado-cobalamin). Also synthesizes adenosylcobalamin 5'-phosphate from adenosylcobinamide-GDP and alpha-ribazole 5'-phosphate. The chain is Adenosylcobinamide-GDP ribazoletransferase from Fervidobacterium nodosum (strain ATCC 35602 / DSM 5306 / Rt17-B1).